Here is a 98-residue protein sequence, read N- to C-terminus: NADH-ubiquinone oxidoreductase chain 4L (98 aa).

Helical transmembrane passes span 1 to 21 (MTPI…GLAF), 26 to 46 (LLSA…ALSL), and 59 to 79 (APML…ALMV).

The protein belongs to the complex I subunit 4L family.

Its subcellular location is the mitochondrion membrane. The catalysed reaction is a ubiquinone + NADH + 5 H(+)(in) = a ubiquinol + NAD(+) + 4 H(+)(out). Functionally, core subunit of the mitochondrial membrane respiratory chain NADH dehydrogenase (Complex I) which catalyzes electron transfer from NADH through the respiratory chain, using ubiquinone as an electron acceptor. Part of the enzyme membrane arm which is embedded in the lipid bilayer and involved in proton translocation. This is NADH-ubiquinone oxidoreductase chain 4L (MT-ND4L) from Tetraodon nigroviridis (Spotted green pufferfish).